The chain runs to 259 residues: Global transcriptional regulator CodY (259 aa).

The tract at residues 1-155 (MALLQKTRKI…GATVVGMEIL (155 aa)) is GAF domain. The H-T-H motif DNA-binding region spans 203–222 (ASKIADRVGITRSVIVNALR). Position 215 is a phosphoserine (Ser-215).

This sequence belongs to the CodY family.

The protein resides in the cytoplasm. DNA-binding global transcriptional regulator which is involved in the adaptive response to starvation and acts by directly or indirectly controlling the expression of numerous genes in response to nutrient availability. During rapid exponential growth, CodY is highly active and represses genes whose products allow adaptation to nutrient depletion. The polypeptide is Global transcriptional regulator CodY (Bacillus licheniformis (strain ATCC 14580 / DSM 13 / JCM 2505 / CCUG 7422 / NBRC 12200 / NCIMB 9375 / NCTC 10341 / NRRL NRS-1264 / Gibson 46)).